The sequence spans 175 residues: Isopentenyl-diphosphate Delta-isomerase (175 aa).

Mn(2+)-binding residues include His-23 and His-30. The region spanning 28 to 162 (TLHLAFCVFV…PLRYTPWFRR (135 aa)) is the Nudix hydrolase domain. Residue Cys-65 is part of the active site. His-67 contacts Mn(2+). Glu-85 is a binding site for Mg(2+). Mn(2+) contacts are provided by Glu-111 and Glu-113. Glu-113 is an active-site residue.

This sequence belongs to the IPP isomerase type 1 family. Mg(2+) serves as cofactor. Requires Mn(2+) as cofactor.

The protein resides in the cytoplasm. The enzyme catalyses isopentenyl diphosphate = dimethylallyl diphosphate. The protein operates within isoprenoid biosynthesis; dimethylallyl diphosphate biosynthesis; dimethylallyl diphosphate from isopentenyl diphosphate: step 1/1. Functionally, catalyzes the 1,3-allylic rearrangement of the homoallylic substrate isopentenyl (IPP) to its highly electrophilic allylic isomer, dimethylallyl diphosphate (DMAPP). The polypeptide is Isopentenyl-diphosphate Delta-isomerase (Halorhodospira halophila (strain DSM 244 / SL1) (Ectothiorhodospira halophila (strain DSM 244 / SL1))).